Here is a 185-residue protein sequence, read N- to C-terminus: MISEVKQDAKSRMEKSLSVYLSDIDGIRTGRARTSVLNGIVVETYGGRVKLNTISSVSVSDNKTLMIKVWDSNNIGAIKTAIMNSNLGFGISCEATTIRLTVPDMTQDMRKNLVKLLGKISEDCRVSIRNIRRDIMDRLKVMQDSKEISEDDLRVAGVEIQKITDDIMKKVNDAFTSKEKELLHV.

Belongs to the RRF family.

The protein resides in the cytoplasm. In terms of biological role, responsible for the release of ribosomes from messenger RNA at the termination of protein biosynthesis. May increase the efficiency of translation by recycling ribosomes from one round of translation to another. The polypeptide is Ribosome-recycling factor (Ehrlichia chaffeensis (strain ATCC CRL-10679 / Arkansas)).